We begin with the raw amino-acid sequence, 425 residues long: Dual-specificity RNA methyltransferase RlmN (425 aa).

Residue Glu136 is the Proton acceptor of the active site. Positions 142–381 constitute a Radical SAM core domain; sequence GDDRGTLCVS…FTAGYASPVR (240 aa). A disulfide bond links Cys149 and Cys392. 3 residues coordinate [4Fe-4S] cluster: Cys156, Cys160, and Cys163. S-adenosyl-L-methionine contacts are provided by residues 218 to 219, Ser250, 272 to 274, and Asn349; these read GE and SLH. The active-site S-methylcysteine intermediate is Cys392.

This sequence belongs to the radical SAM superfamily. RlmN family. It depends on [4Fe-4S] cluster as a cofactor.

The protein localises to the cytoplasm. The enzyme catalyses adenosine(2503) in 23S rRNA + 2 reduced [2Fe-2S]-[ferredoxin] + 2 S-adenosyl-L-methionine = 2-methyladenosine(2503) in 23S rRNA + 5'-deoxyadenosine + L-methionine + 2 oxidized [2Fe-2S]-[ferredoxin] + S-adenosyl-L-homocysteine. The catalysed reaction is adenosine(37) in tRNA + 2 reduced [2Fe-2S]-[ferredoxin] + 2 S-adenosyl-L-methionine = 2-methyladenosine(37) in tRNA + 5'-deoxyadenosine + L-methionine + 2 oxidized [2Fe-2S]-[ferredoxin] + S-adenosyl-L-homocysteine. In terms of biological role, specifically methylates position 2 of adenine 2503 in 23S rRNA and position 2 of adenine 37 in tRNAs. m2A2503 modification seems to play a crucial role in the proofreading step occurring at the peptidyl transferase center and thus would serve to optimize ribosomal fidelity. The sequence is that of Dual-specificity RNA methyltransferase RlmN from Methylorubrum extorquens (strain PA1) (Methylobacterium extorquens).